The primary structure comprises 428 residues: MEILKDYLLHICFILFPILLYQVFWLGKPAILVPKINSGLVTLFACGASVLCIIFPIHEMDYIQYGLQMIPVIICLFYISTASGLTVAASVLCFELLFYEPSAMFVFTLLPFLIIIPILFQKKWPFMSKAKKLLLSLLISCVEIFLFFASSWILSALNILNFQKSGIFVYEAAVSGLFRSSVLLLSIYIIESIAENIALRSQLIHSEKMTIVSELAASVAHEVRNPLTVVRGFVQLLFNDETLQNKSSADYKKLVLSELDRAQGIITNYLDMAKQQLYEKEVFDLSALIKETSSLMVSYANYKSVTVEAETEPDLLIYGDATKLKQAVINLMKNSIEAVPHGKGMIHISAKRNGHTIMINITDNGVGMTDHQMQKLGEPYYSLKTNGTGLGLTVTFSIIEHHHGTISFNSSFQKGTTVTIKLPADLPH.

Topologically, residues 1–6 are cytoplasmic; that stretch reads MEILKD. A helical membrane pass occupies residues 7 to 27; the sequence is YLLHICFILFPILLYQVFWLG. The Extracellular segment spans residues 28-37; it reads KPAILVPKIN. The chain crosses the membrane as a helical span at residues 38-58; that stretch reads SGLVTLFACGASVLCIIFPIH. Residues 59-68 lie on the Cytoplasmic side of the membrane; that stretch reads EMDYIQYGLQ. Residues 69–89 traverse the membrane as a helical segment; the sequence is MIPVIICLFYISTASGLTVAA. At 90 to 99 the chain is on the extracellular side; the sequence is SVLCFELLFY. Residues 100–120 traverse the membrane as a helical segment; the sequence is EPSAMFVFTLLPFLIIIPILF. At 121–132 the chain is on the cytoplasmic side; the sequence is QKKWPFMSKAKK. The helical transmembrane segment at 133 to 153 threads the bilayer; it reads LLLSLLISCVEIFLFFASSWI. Residues 154-166 lie on the Extracellular side of the membrane; sequence LSALNILNFQKSG. Residues 167-187 form a helical membrane-spanning segment; it reads IFVYEAAVSGLFRSSVLLLSI. Topologically, residues 188-428 are cytoplasmic; that stretch reads YIIESIAENI…TIKLPADLPH (241 aa). The Histidine kinase domain maps to 218 to 426; that stretch reads SVAHEVRNPL…TVTIKLPADL (209 aa). A Phosphohistidine; by autocatalysis modification is found at H221.

The protein resides in the cell membrane. The enzyme catalyses ATP + protein L-histidine = ADP + protein N-phospho-L-histidine.. Its function is as follows. Phosphorylates the sporulation-regulatory proteins spo0A and spo0F. Spo0F is required for the KinB activity. The protein is Sporulation kinase B (kinB) of Bacillus subtilis (strain 168).